Here is a 258-residue protein sequence, read N- to C-terminus: MKKKFFERVYSISKEDVEKVEEYFFDKGISNYYFYETKEGVFLVLVSEKKNFEENFSYKLVEERETSSDEWIKNLISKPFEFIDGVYIDPDYHEINDKLVIRITPGLAFGTGLHTTTKLAATLLKKYLRQGMDVLDLGCGSGILSILAKKLGASGVLAVDNDKMAVESAIENVEKNNVEVEIRVSDLLKNVDGKYDLIVSNIIADVLVKALEDMPKFLKKNGIVILSGIIDSKLYLFEHLNIVEHRRKDEWNALVIKF.

Thr117, Gly138, Asp160, and Asn201 together coordinate S-adenosyl-L-methionine.

The protein belongs to the methyltransferase superfamily. PrmA family.

It localises to the cytoplasm. The catalysed reaction is L-lysyl-[protein] + 3 S-adenosyl-L-methionine = N(6),N(6),N(6)-trimethyl-L-lysyl-[protein] + 3 S-adenosyl-L-homocysteine + 3 H(+). Methylates ribosomal protein L11. The chain is Ribosomal protein L11 methyltransferase from Thermosipho melanesiensis (strain DSM 12029 / CIP 104789 / BI429).